The primary structure comprises 522 residues: WEB family protein At2g38370 (522 aa).

The interval 1–32 (MAEFPEPGTVNPDSDLSNGRAEKPEIDTSAPF) is disordered. 2 coiled-coil regions span residues 77–264 (ELQR…AARE) and 299–376 (ARSA…RSEN). Disordered stretches follow at residues 374-397 (SENG…SRRE) and 458-493 (MSLG…RKRK). The span at 473–486 (TVSKRSEGKENEKR) shows a compositional bias: basic and acidic residues.

The protein belongs to the WEB family.

This chain is WEB family protein At2g38370, found in Arabidopsis thaliana (Mouse-ear cress).